The chain runs to 833 residues: Kinesin-like protein KIFC3 (833 aa).

The tract at residues leucine 19 to arginine 74 is disordered. The segment covering proline 30 to proline 48 has biased composition (low complexity). 2 coiled-coil regions span residues leucine 102–alanine 362 and leucine 395–arginine 432. The Kinesin motor domain maps to asparagine 445 to valine 768. Glycine 528 to threonine 535 contacts ATP. Positions glutamate 786–valine 833 are disordered. Polar residues predominate over residues alanine 806–proline 815. Serine 813 and serine 817 each carry phosphoserine.

The protein belongs to the TRAFAC class myosin-kinesin ATPase superfamily. Kinesin family.

The protein localises to the cell junction. Its subcellular location is the adherens junction. The protein resides in the cytoplasm. It is found in the cytoskeleton. It localises to the microtubule organizing center. The protein localises to the centrosome. Its subcellular location is the cytoplasmic vesicle membrane. Functionally, minus-end microtubule-dependent motor protein. Involved in apically targeted transport. Required for zonula adherens maintenance. This is Kinesin-like protein KIFC3 (KIFC3) from Homo sapiens (Human).